The primary structure comprises 1009 residues: RNA2 polyprotein (1009 aa).

The tract at residues 387–393 (FVYKIGG) is involved in tubule formation by the movement protein.

As to quaternary structure, interacts with the large capsid protein. Interacts with the small capsid protein. Homomultimer; assembles as pentons. Interacts with the movement protein (via C-terminus). In terms of assembly, interacts (via C-terminus) with the large capsid protein. Specific enzymatic cleavages by picornain 3C-like protease in vivo yield mature proteins.

It localises to the host cell junction. The protein localises to the host plasmodesma. The protein resides in the virion. Responsible for viral RNA2 accumulation. May function by recruiting the RNA1-encoded polyprotein that contains the replication protein to RNA2 and enable its replication. Functionally, transports the viral genome to neighboring plant cells directly through plasmosdesmata, without any budding. The movement protein allows efficient cell to cell propagation, by bypassing the host cell wall barrier. Acts by forming a tubular structure at the host plasmodesmata, enlarging it enough to allow free passage of virion capsids. Binds to GTP and to single-stranded RNA and single-stranded DNA in a non-sequence-specific manner. In terms of biological role, together with the small capsid protein, forms an icosahedral capsid (T=3) enclosing the viral positive strand RNA genome, with a diameter of approximately 300 Angstroms. The capsid is formed from 60 copies each of the large and the small capsid protein. The large capsid protein interacts with the viral RNA. Its function is as follows. Together with the large capsid protein, forms an icosahedral capsid (T=3) enclosing the viral positive strand RNA genome, with a diameter of approximately 300 Angstroms. The capsid is formed from 60 copies each of the large and the small capsid protein. The small capsid protein forms the turrets at the fivefold axes of the viral particle. This Squash mosaic virus (strain melon) (SqMV) protein is RNA2 polyprotein.